Consider the following 121-residue polypeptide: Small ribosomal subunit protein uS13 (121 aa).

The tract at residues 93–121 (RGLPMRGQRTRTNARTRKGPRKGAAALKK) is disordered.

It belongs to the universal ribosomal protein uS13 family. In terms of assembly, part of the 30S ribosomal subunit. Forms a loose heterodimer with protein S19. Forms two bridges to the 50S subunit in the 70S ribosome.

Its function is as follows. Located at the top of the head of the 30S subunit, it contacts several helices of the 16S rRNA. In the 70S ribosome it contacts the 23S rRNA (bridge B1a) and protein L5 of the 50S subunit (bridge B1b), connecting the 2 subunits; these bridges are implicated in subunit movement. Contacts the tRNAs in the A and P-sites. This Paracidovorax citrulli (strain AAC00-1) (Acidovorax citrulli) protein is Small ribosomal subunit protein uS13.